We begin with the raw amino-acid sequence, 98 residues long: Large ribosomal subunit protein uL23c (98 aa).

This sequence belongs to the universal ribosomal protein uL23 family. Part of the 50S ribosomal subunit.

The protein resides in the plastid. Functionally, binds to 23S rRNA. This chain is Large ribosomal subunit protein uL23c (rpl23), found in Euglena longa (Euglenophycean alga).